Here is a 163-residue protein sequence, read N- to C-terminus: Cuticle protein 38 (163 aa).

Repeat copies occupy residues 7 to 10, 13 to 16, 20 to 23, 26 to 29, 56 to 59, 62 to 65, 68 to 71, 75 to 78, 81 to 84, 93 to 96, 123 to 126, 135 to 138, 141 to 144, and 156 to 159.

Component of the cuticle of migratory locust which contains more than 100 different structural proteins. The chain is Cuticle protein 38 from Locusta migratoria (Migratory locust).